The primary structure comprises 505 residues: MVSIRPDEISAILKQQISDYDKSVSVSNVGTVLQIGDGIARVYGLEQVMAGELVEFEDGTEGIALNLEDDNVGAVLMGEGVGIQEGSTVKATGKIASVPVSDEMLGRVVTPLGQPMDGKGDIPSTESRLIESIAPGIIKRKSVHEPLQTGITSIDSMIPIGRGQRELIIGDRQTGKTAIAIDTIINQKGEDVVCVYVAVGQKAASVANVVEVLREKGALDYTVIVAASASDAAALQYLAPYTGAAIAESFMYKGKATLVIYDDLTKQAQAYRQMSLLLRRPPGREAYPGDVFYCHSRLLERAAKLSDAMGGGSMTALPIIETQAGDVSAYIPTNVISITDGQIFLSSDLFNSGLRPAINVGISVSRVGGAAQTKAIKKIAGTLKLELAQFDELAAFSQFASDLDEATQKQLGRGKRLRELLKQPQFAPLNLAEQVAIVYAGVKGLIDEVPEDQVTQFSRELRDYLKTNKPEYITKVQTEKVLNEDAETILKAAINEVKSSMLASA.

170-177 is a binding site for ATP; sequence GDRQTGKT.

The protein belongs to the ATPase alpha/beta chains family. In terms of assembly, F-type ATPases have 2 components, CF(1) - the catalytic core - and CF(0) - the membrane proton channel. CF(1) has five subunits: alpha(3), beta(3), gamma(1), delta(1), epsilon(1). CF(0) has four main subunits: a(1), b(1), b'(1) and c(9-12).

The protein resides in the cellular thylakoid membrane. It carries out the reaction ATP + H2O + 4 H(+)(in) = ADP + phosphate + 5 H(+)(out). Produces ATP from ADP in the presence of a proton gradient across the membrane. The alpha chain is a regulatory subunit. This is ATP synthase subunit alpha from Prochlorococcus marinus (strain MIT 9303).